The chain runs to 401 residues: Enolase (401 aa).

Residue Q154 participates in (2R)-2-phosphoglycerate binding. E197 serves as the catalytic Proton donor. D233, E274, and D301 together coordinate Mg(2+). Residues K326, R355, S356, and K377 each coordinate (2R)-2-phosphoglycerate. Residue K326 is the Proton acceptor of the active site.

This sequence belongs to the enolase family. Mg(2+) is required as a cofactor.

Its subcellular location is the cytoplasm. It is found in the secreted. The protein resides in the cell surface. The enzyme catalyses (2R)-2-phosphoglycerate = phosphoenolpyruvate + H2O. It participates in carbohydrate degradation; glycolysis; pyruvate from D-glyceraldehyde 3-phosphate: step 4/5. Functionally, catalyzes the reversible conversion of 2-phosphoglycerate (2-PG) into phosphoenolpyruvate (PEP). It is essential for the degradation of carbohydrates via glycolysis. The protein is Enolase of Thermoplasma acidophilum (strain ATCC 25905 / DSM 1728 / JCM 9062 / NBRC 15155 / AMRC-C165).